A 222-amino-acid polypeptide reads, in one-letter code: Fibrillarin-like rRNA/tRNA 2'-O-methyltransferase (222 aa).

S-adenosyl-L-methionine is bound by residues 86–87 (TT), 104–105 (EV), 129–130 (DA), and 149–152 (DISQ).

This sequence belongs to the methyltransferase superfamily. Fibrillarin family. In terms of assembly, interacts with nop5. Component of box C/D small ribonucleoprotein (sRNP) particles that contain rpl7ae, FlpA and nop5, plus a guide RNA.

Involved in pre-rRNA and tRNA processing. Utilizes the methyl donor S-adenosyl-L-methionine to catalyze the site-specific 2'-hydroxyl methylation of ribose moieties in rRNA and tRNA. Site specificity is provided by a guide RNA that base pairs with the substrate. Methylation occurs at a characteristic distance from the sequence involved in base pairing with the guide RNA. The polypeptide is Fibrillarin-like rRNA/tRNA 2'-O-methyltransferase (Thermoplasma volcanium (strain ATCC 51530 / DSM 4299 / JCM 9571 / NBRC 15438 / GSS1)).